The primary structure comprises 538 residues: Atos homolog protein B (538 aa).

Residues 1 to 18 show a composition bias toward low complexity; that stretch reads MRHVQAEPSPSSEPEAGP. Disordered stretches follow at residues 1-114 and 133-300; these read MRHV…LGVA and TSSW…VLDP. Positions 227–238 are enriched in pro residues; the sequence is HTPPGPGPPGPC. Phosphoserine is present on residues Ser254 and Ser255. The segment at 348–430 is required for macropage invasion; that stretch reads LLGNFEESLL…VPKVGTVQVT (83 aa). Residues 436-444 form a transactivation domain 1 (TAD1) region; the sequence is QTVVKMFLV.

Belongs to the ATOS family.

Its subcellular location is the nucleus. Its function is as follows. Transcription regulator that may syncronize transcriptional and translational programs. This Homo sapiens (Human) protein is Atos homolog protein B.